A 156-amino-acid polypeptide reads, in one-letter code: Small ribosomal subunit protein uS7 (156 aa).

Belongs to the universal ribosomal protein uS7 family. As to quaternary structure, part of the 30S ribosomal subunit. Contacts proteins S9 and S11.

One of the primary rRNA binding proteins, it binds directly to 16S rRNA where it nucleates assembly of the head domain of the 30S subunit. Is located at the subunit interface close to the decoding center, probably blocks exit of the E-site tRNA. In Treponema pallidum (strain Nichols), this protein is Small ribosomal subunit protein uS7.